Consider the following 130-residue polypeptide: Small ribosomal subunit protein uS8 (130 aa).

It belongs to the universal ribosomal protein uS8 family. Part of the 30S ribosomal subunit. Contacts proteins S5 and S12.

Functionally, one of the primary rRNA binding proteins, it binds directly to 16S rRNA central domain where it helps coordinate assembly of the platform of the 30S subunit. The protein is Small ribosomal subunit protein uS8 of Marinobacter nauticus (strain ATCC 700491 / DSM 11845 / VT8) (Marinobacter aquaeolei).